Here is a 306-residue protein sequence, read N- to C-terminus: MNNLQTHISSYLEYCLAQKRLDEKTIKAYRIDLIQFYNEISISDPCKIASYDLEKYIEKMHLKYKPKSVRRKIASIKAFFHYLEYKNIILQNPFNKIQIHFREPVILPKTIPLYIVEKFLFTIYKQRSAAKTNYQKRNALRDAAIVELLFSTGIRISELCNLKISDVNLIDGVILIYGKGSKERILQIGNSSVLNILKEYKNDFYNEIVQCNHFFSSQSGKPLSDQSVRRMINKYASLSSIDLHITPHMFRHTFATSLLEADVDIRYIQEMLGHSSINITQIYTHVAVSKQKDILINKHPRKDFHF.

The region spanning 2–84 (NNLQTHISSY…SIKAFFHYLE (83 aa)) is the Core-binding (CB) domain. Residues 106–296 (ILPKTIPLYI…AVSKQKDILI (191 aa)) form the Tyr recombinase domain. Catalysis depends on residues arginine 155, lysine 179, histidine 248, arginine 251, and histidine 274. Tyrosine 283 acts as the O-(3'-phospho-DNA)-tyrosine intermediate in catalysis.

This sequence belongs to the 'phage' integrase family.

The protein resides in the cytoplasm. Its function is as follows. Site-specific tyrosine recombinase, which acts by catalyzing the cutting and rejoining of the recombining DNA molecules. The protein is Tyrosine recombinase EUBREC_2677 of Agathobacter rectalis (strain ATCC 33656 / DSM 3377 / JCM 17463 / KCTC 5835 / VPI 0990) (Eubacterium rectale).